Reading from the N-terminus, the 89-residue chain is Small ribosomal subunit protein uS14A (89 aa).

It belongs to the universal ribosomal protein uS14 family. In terms of assembly, part of the 30S ribosomal subunit. Contacts proteins S3 and S10.

In terms of biological role, binds 16S rRNA, required for the assembly of 30S particles and may also be responsible for determining the conformation of the 16S rRNA at the A site. The chain is Small ribosomal subunit protein uS14A from Ligilactobacillus salivarius (strain UCC118) (Lactobacillus salivarius).